The following is a 1337-amino-acid chain: MFRQGSNSGNKRMTSGARLSQPIIPLSLPTASSKTLEMGRSSKTNPLNAMGLDHNIATSGGDPEYIMQLVNDVRKFSDVLLSLKEAFHSKESQECSQHVVNERLGELVHVLKAVIGKHQALNSSEILGAAGTVIAKVKGVNFKEVNNENKSTIFGEIHTSIDTLAFTFGNVVSDFLMGDVDGGSRLGYPQARRSRSFENLSEDSRGCSQNDLADHSLSPELSTVEQVDLLLLKNDSGVESALLYAKAWSKYTKDVLAWVEKRLSLDMECAKSFAKMAESAKAVASQQDFMPFRDIYVSAFKNEIEYNHVLLQTAAALQTNKFTQPLLARKNDLDKQRKEIKEQWQRELKKMNESESALKKARLLKMQKREEYEKARSSTSRTEEEQPAAGGRTLEKKRRVEEEALQKAEEAQEQYKACVADLEAKKVSLSNAKSEILAQIRKLVFQCDLTLKAVTVNWFQMQQAQTMPLSVNYQALSEQAKKYEPGQRYSEFVRSLPKERVWLESLSQDITASSKTGMSLHKRSQNSTRSSHGNLSQGSATSMDNHSADEVEGNMQPCKAKIAERRSNSSIDMQVPRTQGSQRAWSSGSAGGGGMCSDSESAGGSSESRSMDSPTASPGDFKRRLPRTPSTGTMSSADDLDEREPPSPSDTGLSEMVMETASSPGPFRNAQMSKAAHTHKLRKLRAPSKCRECDSLVVFHGAECEECSLACHKKCLETLAIQCGHKKLQGRLHLFGIDFAQVVKNSPDGIPFIIKKCTSEIESRALTIKGIYRVNGAKSRVEKLCQAFENGKDLVELSDLHPHDISNVLKLYLRQLPEPLILYRYYNDVIGLAKETQNMDKTDSAKEKSAGEQLGLSTELKRVLFKVRDLLRQLPAPHYKTLQFLITHLHRVSEQAEENKMTASNLGIIFGPTLIKPRHLEAEVSLSSLVDYPHQARMVELLIKHHQMIFDVPLSPMSPTSPTVSQASFGSSIQDKESKLSRHSRSLMDIKESAKLYKRHSSVIIPAQLMEEGKEMKTGDHRVQTSGEGSDVNGVGLTSVDSTSVFNRPGASSRMVQLRPQRAKPVSRPISMPIDRLLNERNSRNTVEHDHSPAAIEETTEPEKPTTPRHTNFYRNPFIDTQTLRRTWDRQYRHYDVTPRTAMIVANLPPSGVQKQPEISMASQSSTSRKDGTSQSGVAPISFRAARTLKPSSPGTFYRPPSGGQLKPSDLLAKSVSRAPTTTTGAIYTTAITVLTTASTSSVMTISTAVTTPPTTPTTSVTVALTSKPTFTTVSRSVSGGAGEGLSESDLLSPVTLSPPQSPGSSTEELSPTDAKPLYQRRSRRMQELEHREAHFV.

Residues 1–13 (MFRQGSNSGNKRM) are compositionally biased toward polar residues. 4 disordered regions span residues 1 to 20 (MFRQ…ARLS), 369 to 397 (REEY…LEKK), 513 to 551 (SSKT…ADEV), and 564 to 654 (ERRS…TGLS). The 264-residue stretch at 225-488 (EQVDLLLLKN…QAKKYEPGQR (264 aa)) folds into the F-BAR domain. Residues 326-443 (LLARKNDLDK…SEILAQIRKL (118 aa)) are a coiled coil. The span at 369–384 (REEYEKARSSTSRTEE) shows a compositional bias: basic and acidic residues. Composition is skewed to polar residues over residues 525–545 (QNST…SMDN) and 568–579 (NSSIDMQVPRTQ). Residues 596–613 (CSDSESAGGSSESRSMDS) show a composition bias toward low complexity. The Phorbol-ester/DAG-type zinc-finger motif lies at 676–723 (AHTHKLRKLRAPSKCRECDSLVVFHGAECEECSLACHKKCLETLAIQC). Residues 737-950 (IDFAQVVKNS…LLIKHHQMIF (214 aa)) form the Rho-GAP domain. Polar residues predominate over residues 960 to 973 (TSPTVSQASFGSSI). Disordered regions lie at residues 960-983 (TSPT…LSRH), 1016-1066 (MKTG…AKPV), 1083-1114 (SRNT…TNFY), 1149-1210 (PPSG…KPSD), and 1273-1337 (TVSR…AHFV). Residues 974–983 (QDKESKLSRH) are compositionally biased toward basic and acidic residues. A compositionally biased stretch (basic and acidic residues) spans 1083 to 1092 (SRNTVEHDHS). Polar residues-rich tracts occupy residues 1161–1177 (MASQ…SQSG) and 1295–1310 (VTLS…TEEL). A compositionally biased stretch (basic and acidic residues) spans 1325-1337 (RMQELEHREAHFV).

GTPase activator for the Rho-type GTPases by converting them to an inactive GDP-bound state. Has strong activity toward RHOA, and weaker activity toward RAC1 and CDC42. The protein is Rho GTPase-activating protein 29 (arhgap29) of Danio rerio (Zebrafish).